The following is a 431-amino-acid chain: MLERLSWKRLALELFLACIPALILGAFVGHLPWFLLAAVTGLLIWHFWNLMRLSWWLWVDRSMTPPPGRGSWEPLLYGLHQMQMRNKKRRRELGSLIKRFRSGAESLPDAVVLTTEEGAIFWCNGLAQQILNLRWPDDSGQNILNLLRYPEFANYLKQRDFSKPLNLVLNNARHLEIRVMPYTDKQWLMVARDVTQMHQLEGARRNFFANVSHELRTPLTVLQGYLEMMQEQVLEGATREKALHTMREQTQRMEGLVKQLLTLSRIEAAPALAMNDRIDVPMMLRVVEREAQTLSQEKQTLIFTVDEQLKVLGNEEQLRSAISNLVYNAVNHTPPGTEIRVSWQRTPQGALFSVEDNGPGIAPEHIPLLTERFYRGDKARSRQTGGSGLGLAIVKHAVNHHDSRLEIDSTVGKGTRFSFLLPERLIARNDA.

Residues 1 to 13 lie on the Cytoplasmic side of the membrane; sequence MLERLSWKRLALE. The helical transmembrane segment at 14–34 threads the bilayer; it reads LFLACIPALILGAFVGHLPWF. Residues 35–38 lie on the Periplasmic side of the membrane; the sequence is LLAA. The chain crosses the membrane as a helical span at residues 39–59; sequence VTGLLIWHFWNLMRLSWWLWV. The Cytoplasmic segment spans residues 60–431; it reads DRSMTPPPGR…PERLIARNDA (372 aa). The 69-residue stretch at 98-166 folds into the PAS domain; sequence KRFRSGAESL…KQRDFSKPLN (69 aa). A Histidine kinase domain is found at 210-425; sequence NVSHELRTPL…RFSFLLPERL (216 aa). Residue His-213 is modified to Phosphohistidine; by autocatalysis.

The protein resides in the cell inner membrane. The catalysed reaction is ATP + protein L-histidine = ADP + protein N-phospho-L-histidine.. Functionally, member of the two-component regulatory system PhoR/PhoB involved in the phosphate regulon genes expression. PhoR may function as a membrane-associated protein kinase that phosphorylates PhoB in response to environmental signals. This is Phosphate regulon sensor protein PhoR (phoR) from Klebsiella pneumoniae.